A 154-amino-acid chain; its full sequence is UPF0178 protein SPO3827 (154 aa).

The protein belongs to the UPF0178 family.

In Ruegeria pomeroyi (strain ATCC 700808 / DSM 15171 / DSS-3) (Silicibacter pomeroyi), this protein is UPF0178 protein SPO3827.